The chain runs to 123 residues: Large ribosomal subunit protein bL12 (123 aa).

The protein belongs to the bacterial ribosomal protein bL12 family. In terms of assembly, homodimer. Part of the ribosomal stalk of the 50S ribosomal subunit. Forms a multimeric L10(L12)X complex, where L10 forms an elongated spine to which 2 to 4 L12 dimers bind in a sequential fashion. Binds GTP-bound translation factors.

Functionally, forms part of the ribosomal stalk which helps the ribosome interact with GTP-bound translation factors. Is thus essential for accurate translation. The polypeptide is Large ribosomal subunit protein bL12 (Wigglesworthia glossinidia brevipalpis).